We begin with the raw amino-acid sequence, 315 residues long: Bifunctional protein FolD (315 aa).

NADP(+) contacts are provided by residues 166 to 168 (GRS), Ser-193, and Ile-234.

The protein belongs to the tetrahydrofolate dehydrogenase/cyclohydrolase family. As to quaternary structure, homodimer.

The catalysed reaction is (6R)-5,10-methylene-5,6,7,8-tetrahydrofolate + NADP(+) = (6R)-5,10-methenyltetrahydrofolate + NADPH. The enzyme catalyses (6R)-5,10-methenyltetrahydrofolate + H2O = (6R)-10-formyltetrahydrofolate + H(+). It functions in the pathway one-carbon metabolism; tetrahydrofolate interconversion. Catalyzes the oxidation of 5,10-methylenetetrahydrofolate to 5,10-methenyltetrahydrofolate and then the hydrolysis of 5,10-methenyltetrahydrofolate to 10-formyltetrahydrofolate. This chain is Bifunctional protein FolD, found in Treponema pallidum (strain Nichols).